The chain runs to 427 residues: Enolase (427 aa).

A (2R)-2-phosphoglycerate-binding site is contributed by Q163. The active-site Proton donor is the E205. Mg(2+)-binding residues include D242, E285, and D312. (2R)-2-phosphoglycerate is bound by residues K337, R366, S367, and K388. The active-site Proton acceptor is the K337.

Belongs to the enolase family. Mg(2+) is required as a cofactor.

The protein resides in the cytoplasm. It is found in the secreted. It localises to the cell surface. It carries out the reaction (2R)-2-phosphoglycerate = phosphoenolpyruvate + H2O. Its pathway is carbohydrate degradation; glycolysis; pyruvate from D-glyceraldehyde 3-phosphate: step 4/5. Its function is as follows. Catalyzes the reversible conversion of 2-phosphoglycerate (2-PG) into phosphoenolpyruvate (PEP). It is essential for the degradation of carbohydrates via glycolysis. This Variovorax paradoxus (strain S110) protein is Enolase.